The primary structure comprises 288 residues: NAD(P)H quinone oxidoreductase YCP4 (288 aa).

Residues 3–192 (IAIIQYSTYG…EIAEKQGEAF (190 aa)) enclose the Flavodoxin-like domain. FMN contacts are provided by residues 9 to 13 (STYGH) and 110 to 164 (VFVS…SPYG). Positions 202 to 288 (GSKKTNTTTT…KSSCSKCIIM (87 aa)) are disordered. Residues 205-254 (KTNTTTTSKSAATSDAAGTTSGTAAGTSAATGAATGTSAPKESTKEASSS) are compositionally biased toward low complexity. Positions 261-288 (NGTATRTQQSTKAPETAEKSSCSKCIIM) are enriched in polar residues.

This sequence belongs to the WrbA family. The cofactor is FMN.

It is found in the cell membrane. The catalysed reaction is a quinone + NADH + H(+) = a quinol + NAD(+). The enzyme catalyses a quinone + NADPH + H(+) = a quinol + NADP(+). Flavodoxin-like protein (FLP) that plays a role in cell wall integrity, oxidative stress protection and virulence. FLPs act as NAD(P)H quinone oxidoreductases. Reduces ubiquinone (coenzyme Q), enabling it to serve as an antioxidant in the membrane. This Candida albicans (strain SC5314 / ATCC MYA-2876) (Yeast) protein is NAD(P)H quinone oxidoreductase YCP4.